The following is a 152-amino-acid chain: MKTFFLKEKQINKKWFVIDAEGLVVGRLAAFVATLLRGKHKPEYTPHMDCGDNVIIINAEKVHFTGKKLKDKIYYKHTGYSGGLKKTTPDNILNGKFPERVIEMAVKRMLDDGPMARRRFENLYVYSGSEHKHQGQQPEKIDFASLNRKNKK.

This sequence belongs to the universal ribosomal protein uL13 family. Part of the 50S ribosomal subunit.

This protein is one of the early assembly proteins of the 50S ribosomal subunit, although it is not seen to bind rRNA by itself. It is important during the early stages of 50S assembly. This Wolbachia sp. subsp. Drosophila simulans (strain wRi) protein is Large ribosomal subunit protein uL13.